The chain runs to 1243 residues: Tau-tubulin kinase 2 (1243 aa).

The Protein kinase domain maps to 21–284; sequence WKVLRKIGGG…LLTSVFDNSI (264 aa). ATP contacts are provided by residues 27–35 and Lys-50; that span reads IGGGGFGEI. Asp-141 serves as the catalytic Proton acceptor. Residue Ser-445 is modified to Phosphoserine. Residues 674–683 show a composition bias toward polar residues; the sequence is VASTQSTSGS. 2 disordered regions span residues 674 to 695 and 737 to 761; these read VASTQSTSGSFHYGPQPEKKDL and TGHDMLPNMRDGDTSQDLGPKDPPD. Phosphoserine is present on Ser-786. A disordered region spans residues 1063-1086; sequence QINGSASPQFLPRPPPGKPPVRPG. Residues 1073–1084 are compositionally biased toward pro residues; sequence LPRPPPGKPPVR. Ser-1102 is modified (phosphoserine). The span at 1115 to 1129 shows a compositional bias: polar residues; sequence QNGSQKSRSTTQCKS. The interval 1115-1243 is disordered; that stretch reads QNGSQKSRST…KSKPASKLSR (129 aa). 3 stretches are compositionally biased toward low complexity: residues 1144 to 1170, 1187 to 1202, and 1227 to 1243; these read VVPRRSPSASPRSSSLPRTSSSSPSRA, SKSPPSHSGSSSSRRS, and SSKTPPGKSKPASKLSR.

It belongs to the protein kinase superfamily. CK1 Ser/Thr protein kinase family. Interacts with CEP164. Interacts with MCRS1; the interaction is required for recruitment of TTBK2 to the mother centriole.

It localises to the cell projection. The protein resides in the cilium. The protein localises to the cytoplasm. It is found in the cytoskeleton. Its subcellular location is the cilium basal body. It localises to the microtubule organizing center. The protein resides in the centrosome. The protein localises to the centriole. It is found in the cytosol. Its subcellular location is the nucleus. The catalysed reaction is L-seryl-[protein] + ATP = O-phospho-L-seryl-[protein] + ADP + H(+). It carries out the reaction L-threonyl-[protein] + ATP = O-phospho-L-threonyl-[protein] + ADP + H(+). In terms of biological role, serine/threonine kinase that acts as a key regulator of ciliogenesis: controls the initiation of ciliogenesis by binding to the distal end of the basal body and promoting the removal of CCP110, which caps the mother centriole, leading to the recruitment of IFT proteins, which build the ciliary axoneme. Has some substrate preference for proteins that are already phosphorylated on a Tyr residue at the +2 position relative to the phosphorylation site. Able to phosphorylate tau on serines in vitro. Phosphorylates MPHOSPH9 which promotes its ubiquitination and proteasomal degradation, loss of MPHOSPH9 facilitates the removal of the CP110-CEP97 complex (a negative regulator of ciliogenesis) from the mother centrioles, promoting the initiation of ciliogenesis. Required for recruitment of CPLANE2 and INTU to the mother centriole. The protein is Tau-tubulin kinase 2 (Ttbk2) of Mus musculus (Mouse).